The sequence spans 154 residues: NADPH-dependent 7-cyano-7-deazaguanine reductase (154 aa).

Residues 1 to 21 (MPNTDVSSLSMLGHQTETASS) are compositionally biased toward polar residues. Positions 1-26 (MPNTDVSSLSMLGHQTETASSPEEAV) are disordered. The active-site Thioimide intermediate is the Cys52. The Proton donor role is filled by Asp59. Residues 74-76 (VES) and 93-94 (HE) each bind substrate.

This sequence belongs to the GTP cyclohydrolase I family. QueF type 1 subfamily.

The protein localises to the cytoplasm. It carries out the reaction 7-aminomethyl-7-carbaguanine + 2 NADP(+) = 7-cyano-7-deazaguanine + 2 NADPH + 3 H(+). Its pathway is tRNA modification; tRNA-queuosine biosynthesis. Functionally, catalyzes the NADPH-dependent reduction of 7-cyano-7-deazaguanine (preQ0) to 7-aminomethyl-7-deazaguanine (preQ1). This is NADPH-dependent 7-cyano-7-deazaguanine reductase from Rhizobium etli (strain ATCC 51251 / DSM 11541 / JCM 21823 / NBRC 15573 / CFN 42).